The following is a 100-amino-acid chain: Urease subunit gamma (100 aa).

This sequence belongs to the urease gamma subunit family. As to quaternary structure, heterotrimer of UreA (gamma), UreB (beta) and UreC (alpha) subunits. Three heterotrimers associate to form the active enzyme. The apoenzyme interacts with an accessory complex composed of UreD, UreF and UreG, which is required for the assembly of the nickel containing metallocenter of UreC. The UreE protein may also play a direct role as a metallochaperone in nickel transfer to the urease apoprotein.

The protein resides in the cytoplasm. It carries out the reaction urea + 2 H2O + H(+) = hydrogencarbonate + 2 NH4(+). Its pathway is nitrogen metabolism; urea degradation; CO(2) and NH(3) from urea (urease route): step 1/1. The apoenzyme can be activated in vitro in the presence of nickel ions and carbon dioxide, which promotes carbamylation of 'Lys-217' of the UreC (alpha) subunit. This chain is Urease subunit gamma, found in Klebsiella aerogenes (Enterobacter aerogenes).